The following is a 142-amino-acid chain: uncharacterized protein (142 aa).

Residues 1 to 9 (MDMVSPVLN) are Cytoplasmic-facing. The helical transmembrane segment at 10 to 30 (LQSSILGELVGIIGKVFFLLI) threads the bilayer. Over 31–41 (EEIKYPIITPK) the chain is Extracellular. The helical transmembrane segment at 42 to 62 (IIVDAQISSWSLFFFASICNL) threads the bilayer. The Cytoplasmic segment spans residues 63-101 (SAKFREPIVTTSSIISLMESEKDLKNVNEYFQIMAKMLF). The helical transmembrane segment at 102–122 (ILENKIVVSLFVVFNISVLII) threads the bilayer. Topologically, residues 123–142 (VKSEPYSYGKVLFKPSSSIF) are extracellular.

It is found in the membrane. This is an uncharacterized protein from Saccharomyces cerevisiae (strain ATCC 204508 / S288c) (Baker's yeast).